The primary structure comprises 81 residues: Toxin TdNa10 (81 aa).

The signal sequence occupies residues 1-20 (MWTFAIVLAFLLIGLDEGEA). The LCN-type CS-alpha/beta domain maps to 21–81 (LDGYPLSKNN…KMYPGELPCH (61 aa)). Disulfide bonds link C32-C80, C36-C57, C42-C62, and C46-C64.

Belongs to the long (4 C-C) scorpion toxin superfamily. Sodium channel inhibitor family. Beta subfamily. In terms of tissue distribution, expressed by the venom gland.

The protein resides in the secreted. Functionally, alpha toxins bind voltage-independently at site-3 of sodium channels (Nav) and inhibit the inactivation of the activated channels, thereby blocking neuronal transmission. This toxin binds, in vitro, to sodium channels and inhibits the inactivation of the activated channels. Seems not toxic to mice, crickets and sweet-water shrimps. The sequence is that of Toxin TdNa10 from Tityus discrepans (Venezuelan scorpion).